The primary structure comprises 510 residues: MIWHVQNENFILDSTRIFMKAFHLLLFDGSLIFPECILIFGLILLLMIDSTSDQKDIPWLYFISSTSLVMSITALLFRWREEPMISFSGNFQTNNFNEIFQFLILLCSTLCIPLSVEYIECTEMAITEFLLFVLTATLGGMFLCGANDLITIFVAPECFSLCSYLLSGYTKKDVRSNEATMKYLLMGGASSSILVHGFSWLYGSSGGEIELQEIVNGLINTQMYNSPGISIALIFITVGIGFKLSPAPSHQWTPDVYEGSPTPVVAFLSVTSKVAASASATRIFDIPFYFSSNEWHLLLEILAILSMILGNLIAITQTSMKRMLAYSSIGQIGYVIIGIIVGDSNDGYASMITYMLFYISMNLGTFACIVLFGLRTGTDNIRDYAGLYTKDPFLALSLALCLLSLGGLPPLAGFFGKLYLFWCGWQAGLYFLVLIGLLTSVVSIYYYLKIIKLLMIGRNQEITPHVRNYRRSPFRSNNSIELSMIVCVIASTIPGISMNPIIAIAQDTLF.

13 consecutive transmembrane segments (helical) span residues 24–44, 57–77, 99–119, 124–144, 149–169, 183–203, 227–247, 295–315, 323–343, 354–374, 395–415, 418–438, and 484–504; these read LLLFDGSLIFPECILIFGLIL, IPWLYFISSTSLVMSITALLF, IFQFLILLCSTLCIPLSVEYI, MAITEFLLFVLTATLGGMFLC, LITIFVAPECFSLCSYLLSGY, YLLMGGASSSILVHGFSWLYG, PGISIALIFITVGIGFKLSPA, WHLLLEILAILSMILGNLIAI, MLAYSSIGQIGYVIIGIIVGD, YMLFYISMNLGTFACIVLFGL, ALSLALCLLSLGGLPPLAGFF, LYLFWCGWQAGLYFLVLIGLL, and MIVCVIASTIPGISMNPIIAI.

This sequence belongs to the complex I subunit 2 family. As to quaternary structure, NDH is composed of at least 16 different subunits, 5 of which are encoded in the nucleus.

The protein localises to the plastid. It is found in the chloroplast thylakoid membrane. It catalyses the reaction a plastoquinone + NADH + (n+1) H(+)(in) = a plastoquinol + NAD(+) + n H(+)(out). The enzyme catalyses a plastoquinone + NADPH + (n+1) H(+)(in) = a plastoquinol + NADP(+) + n H(+)(out). NDH shuttles electrons from NAD(P)H:plastoquinone, via FMN and iron-sulfur (Fe-S) centers, to quinones in the photosynthetic chain and possibly in a chloroplast respiratory chain. The immediate electron acceptor for the enzyme in this species is believed to be plastoquinone. Couples the redox reaction to proton translocation, and thus conserves the redox energy in a proton gradient. This chain is NAD(P)H-quinone oxidoreductase subunit 2 A, chloroplastic, found in Panax ginseng (Korean ginseng).